A 453-amino-acid polypeptide reads, in one-letter code: Allantoinase (453 aa).

Positions 59, 61, 146, 186, 242, and 315 each coordinate Zn(2+). At Lys146 the chain carries N6-carboxylysine.

This sequence belongs to the metallo-dependent hydrolases superfamily. Allantoinase family. Homotetramer. It depends on Zn(2+) as a cofactor. Post-translationally, carboxylation allows a single lysine to coordinate two zinc ions.

It catalyses the reaction (S)-allantoin + H2O = allantoate + H(+). It participates in nitrogen metabolism; (S)-allantoin degradation; allantoate from (S)-allantoin: step 1/1. Its function is as follows. Catalyzes the conversion of allantoin (5-ureidohydantoin) to allantoic acid by hydrolytic cleavage of the five-member hydantoin ring. The polypeptide is Allantoinase (Escherichia coli O9:H4 (strain HS)).